Consider the following 373-residue polypeptide: COP9 signalosome complex subunit 5 (373 aa).

An MPN domain is found at 66–201 (CLISRLATTK…IGAFRTLPSK (136 aa)). Zn(2+)-binding residues include histidine 147, histidine 149, and aspartate 160. The JAMM motif signature appears at 147-160 (HSHPGYGCWLSNID). The interval 289–325 (FTHERSNSISSTSSLTTRHTTDVEMDDQESAQSSLDI) is disordered. Over residues 295-306 (NSISSTSSLTTR) the composition is skewed to low complexity.

It belongs to the peptidase M67A family. CSN5 subfamily. In terms of assembly, component of the COP9 signalosome (CSN) complex.

The protein localises to the cytoplasm. The protein resides in the nucleus. Its function is as follows. Catalytic Component of the COP9 signalosome (CSN) complex that acts as an regulator of the ubiquitin (Ubl) conjugation pathway by mediating the deneddylation of the cullin subunit of SCF-type E3 ubiquitin-protein ligase complexes. The CNS complex is involved in the regulation of the mating pheromone response. The sequence is that of COP9 signalosome complex subunit 5 (RRI1) from Kluyveromyces lactis (strain ATCC 8585 / CBS 2359 / DSM 70799 / NBRC 1267 / NRRL Y-1140 / WM37) (Yeast).